Consider the following 21-residue polypeptide: Cyanophlyctin (21 aa).

As to expression, expressed by the skin glands.

It localises to the secreted. In terms of biological role, has antibacterial activity against E.coli HP101BA (MIC=6.4 uM), K.pneumoniae PTCC1388 (MIC=7.3 uM), M.luteus PTCC1625 (MIC=4.7 uM) and S.aureus PTCC1431 (MIC=5.3 uM). Has no or very limited (&lt;3%) hemolytic activity at concentrations of 15 ug/ml and 60 ug/ml, respectively. In Euphlyctis cyanophlyctis (Skittering frog), this protein is Cyanophlyctin.